The sequence spans 1064 residues: MDDKASVGKISVSSDSVSTLNSEDFVLVSRQGDETPSTNNGSDDEKTGLKIVGNGSEQQLQKELADVLMDPPMDDQPGERSQLDGEGDGPLSNQLSASSTINPVPLVGLPKPEMSLPVKPGQGDSEVSSPFTPVADEDSVVFNKLTYLGCASVNAPRSEVEALRMMSILRSQCQISLDVTLSVPNVSEGTVRLLDPQTNTEIANYPIYKILFCVRGHDGTPESDCFAFTESHYNAELFRIHVFRCEIQEAVSRILYSFATAFRRSAKQTPLSATAAPQTPDSDIFTFSVSLEIKEDDGKGYFSAVPKDKDRQCFKLRQGIDKKIVICVQQTANKELAIERCFGLLLSPGKDVRNSDMHLLDLESMGKSSDGKSYVITGSWNPKSPHFQVVNEETPKDKVLFMTTAVDLVITEVQEPVRFLLETKVRVCSPNERLFWPFSKRSTTENFFLKLKQIKQKEKKNNADTLYEVVCLESESERERRKTTASPSVRLPQSGSQSSMIPSPPEDDEEEDNDEPLLSGFGDVSKECAEKILETWGELLSKWHLNLSVRPKQLSSLVRSGVPEALRGEVWQLLAGCHNNDHLVEKYRILITKESPQDSAITRDINRTFPAHDYFKDTGGDGQDSLYKICKAYSVYDEEIGYCQGQSFLAAVLLLHMPEEQAFSVLVKIMFDYGLRELFKQNFEDLHCKFYQLERLMQEYIPDLYNHFLDISLEAHMYASQWFLTLFTAKFPLYMVFHIIDLLLCEGISVIFNVALGLLKTSKDDLLLTDFEGALKFFRVQLPKRYRSEENAKRLMELACNTKISQKKLKKFEKEYHTMREQQAQQEDPIERFERENRRLQEANMRLEQENDDLAHELVTSKIALRKDLDNAEEKADALNKELLMTKQKLIDAEDEKRRLEEESAQLKEMCRRELDKAESEIKKNSSIIGDYKQICSQLSERLEKQQTANKVEIEKIRQKVDDCDRCRDFFNKEGRVKGISSAKGVSDEDTDEEKETLKNQLREMELELAQTKLQLVEAECKIQDLEHHLGLALSEVQAAKKTWFNRTLSSIKTATGVQGKETC.

A disordered region spans residues 1-101 (MDDKASVGKI…SNQLSASSTI (101 aa)). Over residues 7–22 (VGKISVSSDSVSTLNS) the composition is skewed to low complexity. Residue Ser-42 is modified to Phosphoserine. Polar residues predominate over residues 91-101 (LSNQLSASSTI). The 157-residue stretch at 137–293 (EDSVVFNKLT…IFTFSVSLEI (157 aa)) folds into the PID domain. At Ser-355 the chain carries Phosphoserine. Residues 478–520 (RERRKTTASPSVRLPQSGSQSSMIPSPPEDDEEEDNDEPLLSG) form a disordered region. Positions 484–501 (TASPSVRLPQSGSQSSMI) are enriched in polar residues. Positions 505–515 (PEDDEEEDNDE) are enriched in acidic residues. In terms of domain architecture, Rab-GAP TBC spans 561-747 (GVPEALRGEV…HIIDLLLCEG (187 aa)). The stretch at 805–1038 (SQKKLKKFEK…HLGLALSEVQ (234 aa)) forms a coiled coil. At Thr-991 the chain carries Phosphothreonine.

In terms of assembly, interacts with RAB6A and tubulin gamma.

It is found in the cytoplasm. Its subcellular location is the cytosol. It localises to the cytoskeleton. The protein localises to the microtubule organizing center. The protein resides in the centrosome. Its function is as follows. May act as a GTPase-activating protein of RAB6A. May play a role in microtubule nucleation by centrosome. May participate in a RAB6A-mediated pathway involved in the metaphase-anaphase transition. The sequence is that of Rab GTPase-activating protein 1 from Mus musculus (Mouse).